Reading from the N-terminus, the 491-residue chain is Protein nucleotidyltransferase YdiU (491 aa).

The ATP site is built by glycine 94, glycine 96, arginine 97, lysine 117, aspartate 129, glycine 130, arginine 180, and arginine 187. Aspartate 256 serves as the catalytic Proton acceptor. Positions 257 and 266 each coordinate Mg(2+). An ATP-binding site is contributed by aspartate 266.

Belongs to the SELO family. Mg(2+) is required as a cofactor. Mn(2+) serves as cofactor.

It catalyses the reaction L-seryl-[protein] + ATP = 3-O-(5'-adenylyl)-L-seryl-[protein] + diphosphate. The enzyme catalyses L-threonyl-[protein] + ATP = 3-O-(5'-adenylyl)-L-threonyl-[protein] + diphosphate. The catalysed reaction is L-tyrosyl-[protein] + ATP = O-(5'-adenylyl)-L-tyrosyl-[protein] + diphosphate. It carries out the reaction L-histidyl-[protein] + UTP = N(tele)-(5'-uridylyl)-L-histidyl-[protein] + diphosphate. It catalyses the reaction L-seryl-[protein] + UTP = O-(5'-uridylyl)-L-seryl-[protein] + diphosphate. The enzyme catalyses L-tyrosyl-[protein] + UTP = O-(5'-uridylyl)-L-tyrosyl-[protein] + diphosphate. In terms of biological role, nucleotidyltransferase involved in the post-translational modification of proteins. It can catalyze the addition of adenosine monophosphate (AMP) or uridine monophosphate (UMP) to a protein, resulting in modifications known as AMPylation and UMPylation. The chain is Protein nucleotidyltransferase YdiU from Clostridium botulinum (strain ATCC 19397 / Type A).